The primary structure comprises 156 residues: ATP synthase subunit b (156 aa).

A helical transmembrane segment spans residues 7 to 29 (LLGQAISFLLFVWFCMKFVWPPL).

The protein belongs to the ATPase B chain family. In terms of assembly, F-type ATPases have 2 components, F(1) - the catalytic core - and F(0) - the membrane proton channel. F(1) has five subunits: alpha(3), beta(3), gamma(1), delta(1), epsilon(1). F(0) has three main subunits: a(1), b(2) and c(10-14). The alpha and beta chains form an alternating ring which encloses part of the gamma chain. F(1) is attached to F(0) by a central stalk formed by the gamma and epsilon chains, while a peripheral stalk is formed by the delta and b chains.

Its subcellular location is the cell inner membrane. Functionally, f(1)F(0) ATP synthase produces ATP from ADP in the presence of a proton or sodium gradient. F-type ATPases consist of two structural domains, F(1) containing the extramembraneous catalytic core and F(0) containing the membrane proton channel, linked together by a central stalk and a peripheral stalk. During catalysis, ATP synthesis in the catalytic domain of F(1) is coupled via a rotary mechanism of the central stalk subunits to proton translocation. Its function is as follows. Component of the F(0) channel, it forms part of the peripheral stalk, linking F(1) to F(0). In Shewanella pealeana (strain ATCC 700345 / ANG-SQ1), this protein is ATP synthase subunit b.